A 231-amino-acid chain; its full sequence is Aquaporin Z (231 aa).

2 helical membrane passes run 9 to 29 (CFGT…AAGF) and 34 to 54 (IGFA…AFAV). The short motif at 63–65 (NPA) is the NPA 1 element. 3 helical membrane passes run 82 to 102 (VGYV…LYLI), 129 to 149 (YSML…LLVI), and 156 to 176 (FAPA…IHLI). Positions 186–188 (NPA) match the NPA 2 motif. A helical transmembrane segment spans residues 202 to 222 (LEQLWFFWVVPIVGGIIGGLI).

The protein belongs to the MIP/aquaporin (TC 1.A.8) family. Homotetramer.

It localises to the cell inner membrane. The catalysed reaction is H2O(in) = H2O(out). Its function is as follows. Channel that permits osmotically driven movement of water in both directions. It is involved in the osmoregulation and in the maintenance of cell turgor during volume expansion in rapidly growing cells. It mediates rapid entry or exit of water in response to abrupt changes in osmolarity. This chain is Aquaporin Z, found in Escherichia coli O6:H1 (strain CFT073 / ATCC 700928 / UPEC).